The following is a 234-amino-acid chain: uncharacterized protein (234 aa).

2 helical membrane-spanning segments follow: residues 20–40 (LILL…FKVI) and 176–196 (VMAF…LHFL).

This sequence belongs to the CpsC/CapA family.

The protein localises to the cell membrane. This is an uncharacterized protein from Bacillus subtilis (strain 168).